The chain runs to 432 residues: D-amino acid dehydrogenase (432 aa).

Residue 3-17 (VLVLGGGVIGVTSAY) participates in FAD binding.

This sequence belongs to the DadA oxidoreductase family. Requires FAD as cofactor.

It carries out the reaction a D-alpha-amino acid + A + H2O = a 2-oxocarboxylate + AH2 + NH4(+). It functions in the pathway amino-acid degradation; D-alanine degradation; NH(3) and pyruvate from D-alanine: step 1/1. Its function is as follows. Oxidative deamination of D-amino acids. The polypeptide is D-amino acid dehydrogenase (Delftia acidovorans (strain DSM 14801 / SPH-1)).